Reading from the N-terminus, the 122-residue chain is MTNNDKIVAIVTSIAVICISLTVIFCDTLVLAVGVPTLVLLWLVFLGWINNKKLDKGEMRRAITGSIVIAFFIILIAISKNPDIYSNNKEIFSLFFGMVTTIIGYYFGYRSGKESKNSSGNE.

4 consecutive transmembrane segments (helical) span residues Ile-7–Asp-27, Leu-29–Ile-49, Ala-62–Pro-82, and Lys-89–Tyr-109.

It localises to the cell membrane. This is an uncharacterized protein from Methanocaldococcus jannaschii (strain ATCC 43067 / DSM 2661 / JAL-1 / JCM 10045 / NBRC 100440) (Methanococcus jannaschii).